We begin with the raw amino-acid sequence, 647 residues long: Versicolorin B synthase (647 aa).

An N-terminal signal peptide occupies residues 1-26 (MALSTILTAAAMPVAGLFAFAQQSSA). FAD-binding positions include 85–86 (TA) and 106–107 (EA). Asparagine 117 is a glycosylation site (N-linked (GlcNAc...) asparagine). 172–175 (GAML) contributes to the FAD binding site. Residues asparagine 222 and asparagine 509 are each glycosylated (N-linked (GlcNAc...) asparagine). FAD is bound by residues alanine 617 and 628–629 (PM).

Belongs to the GMC oxidoreductase family. In terms of assembly, homodimer. The cofactor is FAD.

It localises to the cytoplasm. It is found in the cytosol. It catalyses the reaction (2S-3S)-versiconal hemiacetal = versicolorin B + H2O. The enzyme catalyses (S)-5'-oxoaverantin + H(+) = (1'S,5'S)-averufin + H2O. Its pathway is mycotoxin biosynthesis. Its function is as follows. Versicolorin B synthase; part of the fragmented gene cluster that mediates the biosynthesis of dothistromin (DOTH), a polyketide toxin very similar in structure to the aflatoxin precursor, versicolorin B. The first step of the pathway is the conversion of acetate to norsolorinic acid (NOR) and requires the fatty acid synthase subunits hexA and hexB, as well as the polyketide synthase pksA. PksA combines a hexanoyl starter unit and 7 malonyl-CoA extender units to synthesize the precursor NOR. The hexanoyl starter unit is provided to the acyl-carrier protein (ACP) domain by the fungal fatty acid synthase hexA/hexB. The second step is the conversion of NOR to averantin (AVN) and requires the norsolorinic acid ketoreductase nor1, which catalyzes the dehydration of norsolorinic acid to form (1'S)-averantin. The cytochrome P450 monooxygenase avnA then catalyzes the hydroxylation of AVN to 5'hydroxyaverantin (HAVN). The next step is performed by adhA that transforms HAVN to averufin (AVF). Averufin might then be converted to hydroxyversicolorone by cypX and avfA. Hydroxyversicolorone is further converted versiconal hemiacetal acetate (VHA) by moxY. VHA is then the substrate for the versiconal hemiacetal acetate esterase est1 to yield versiconal (VAL). Versicolorin B synthase vbsA then converts VAL to versicolorin B (VERB) by closing the bisfuran ring. Then, the activity of the versicolorin B desaturase verB leads to versicolorin A (VERA). DotB, a predicted chloroperoxidase, may perform epoxidation of the A-ring of VERA. Alternatively, a cytochrome P450, such as cypX or avnA could catalyze this step. It is also possible that another, uncharacterized, cytochrome P450 enzyme is responsible for this step. Opening of the epoxide could potentially be achieved by the epoxide hydrolase epoA. However, epoA seems not to be required for DOTH biosynthesis, but other epoxide hydrolases may have the ability to complement this hydrolysis. Alternatively, opening of the epoxide ring could be achieved non-enzymatically. The next step is the deoxygenation of ring A to yield the 5,8-dihydroxyanthraquinone which is most likely catalyzed by the NADPH dehydrogenase encoded by ver1. The last stages of DOTH biosynthesis are proposed to involve hydroxylation of the bisfuran. OrdB and norB might have oxidative roles here. An alternative possibility is that cytochrome P450 monoogenases such as avnA and cypX might perform these steps in addition to previously proposed steps. The sequence is that of Versicolorin B synthase from Dothistroma septosporum (Red band needle blight fungus).